Consider the following 172-residue polypeptide: WW domain binding protein VOPP1 (172 aa).

Residues 1–22 form the signal peptide; the sequence is MARPLGRVAALLLGLLMECTEA. Residues 23-60 are Extracellular-facing; sequence KKHCWYFEGLYPTYYICRSYEDCCGSRCCVRALSIQRL. A helical transmembrane segment spans residues 61–81; the sequence is WYFWFLLMMGVLFCCGAGFFI. Residues 82 to 172 are Cytoplasmic-facing; that stretch reads RRRMYPPPLI…PPYEQVVKDK (91 aa). Positions 139-172 are disordered; sequence QVQPNSPHGGTTYPPPPSYCNTPPPPYEQVVKDK. Over residues 151–165 the composition is skewed to pro residues; that stretch reads YPPPPSYCNTPPPPY.

The protein belongs to the VOPP1/ECOP family. As to quaternary structure, interacts with WWOX (via WW domain).

The protein localises to the cytoplasmic vesicle membrane. It localises to the late endosome membrane. The protein resides in the lysosome membrane. Its function is as follows. Increases the transcriptional activity of NFKB1 by facilitating its nuclear translocation, DNA-binding and associated apoptotic response, when overexpressed. May sequester WWOX in lysosomal vesicles and thereby regulate WWOX role as tumor suppressor. This Rattus norvegicus (Rat) protein is WW domain binding protein VOPP1.